Reading from the N-terminus, the 269-residue chain is Membrane protein insertase YidC 1 (269 aa).

The N-terminal stretch at 1–20 (MKKKFSLIAMAGAALLLLTA) is a signal peptide. Cys-21 carries the N-palmitoyl cysteine lipid modification. Cys-21 carries S-diacylglycerol cysteine lipidation. 4 consecutive transmembrane segments (helical) span residues 45-65 (IRFL…TIVI), 124-144 (YMGC…YQAL), 165-185 (PTFI…YLMM), and 203-223 (PIFI…YWVI).

Belongs to the OXA1/ALB3/YidC family. Type 2 subfamily.

The protein localises to the cell membrane. Functionally, required for the insertion and/or proper folding and/or complex formation of integral membrane proteins into the membrane. Involved in integration of membrane proteins that insert both dependently and independently of the Sec translocase complex, as well as at least some lipoproteins. This is Membrane protein insertase YidC 1 from Lactococcus lactis subsp. lactis (strain IL1403) (Streptococcus lactis).